A 217-amino-acid chain; its full sequence is 3,4-dihydroxy-2-butanone 4-phosphate synthase (217 aa).

D-ribulose 5-phosphate-binding positions include 37–38 (RE), D42, 150–154 (RRGHT), and E174. E38 serves as a coordination point for Mg(2+). Residue H153 participates in Mg(2+) binding.

Belongs to the DHBP synthase family. In terms of assembly, homodimer. It depends on Mg(2+) as a cofactor. Mn(2+) is required as a cofactor.

The enzyme catalyses D-ribulose 5-phosphate = (2S)-2-hydroxy-3-oxobutyl phosphate + formate + H(+). It participates in cofactor biosynthesis; riboflavin biosynthesis; 2-hydroxy-3-oxobutyl phosphate from D-ribulose 5-phosphate: step 1/1. Functionally, catalyzes the conversion of D-ribulose 5-phosphate to formate and 3,4-dihydroxy-2-butanone 4-phosphate. The polypeptide is 3,4-dihydroxy-2-butanone 4-phosphate synthase (Yersinia pseudotuberculosis serotype O:1b (strain IP 31758)).